The following is a 160-amino-acid chain: 2-C-methyl-D-erythritol 2,4-cyclodiphosphate synthase (160 aa).

Residues Asp9 and His11 each coordinate a divalent metal cation. Residues 9–11 (DVH) and 35–36 (HS) contribute to the 4-CDP-2-C-methyl-D-erythritol 2-phosphate site. Position 43 (His43) interacts with a divalent metal cation. Residues 57 to 59 (DIG), 62 to 66 (FPDND), and Phe140 contribute to the 4-CDP-2-C-methyl-D-erythritol 2-phosphate site.

This sequence belongs to the IspF family. In terms of assembly, homotrimer. A divalent metal cation is required as a cofactor.

The catalysed reaction is 4-CDP-2-C-methyl-D-erythritol 2-phosphate = 2-C-methyl-D-erythritol 2,4-cyclic diphosphate + CMP. It participates in isoprenoid biosynthesis; isopentenyl diphosphate biosynthesis via DXP pathway; isopentenyl diphosphate from 1-deoxy-D-xylulose 5-phosphate: step 4/6. Functionally, involved in the biosynthesis of isopentenyl diphosphate (IPP) and dimethylallyl diphosphate (DMAPP), two major building blocks of isoprenoid compounds. Catalyzes the conversion of 4-diphosphocytidyl-2-C-methyl-D-erythritol 2-phosphate (CDP-ME2P) to 2-C-methyl-D-erythritol 2,4-cyclodiphosphate (ME-CPP) with a corresponding release of cytidine 5-monophosphate (CMP). The chain is 2-C-methyl-D-erythritol 2,4-cyclodiphosphate synthase from Fusobacterium nucleatum subsp. nucleatum (strain ATCC 25586 / DSM 15643 / BCRC 10681 / CIP 101130 / JCM 8532 / KCTC 2640 / LMG 13131 / VPI 4355).